The chain runs to 897 residues: MEQPVIKEGTLALIDTFAYLFRSYYMSAKNKPLTNDKGFPTGLLTGLVGMVKKFYKDRKNMPFIVFALESQTKTKRAEKLGEYKQNRKDAPKEMLLQIPIALEWLQKMGFTCVEVGGFEADDVIASLATLSPYKTRIYSKDKDFNQLLSDKIALFDGKTEFLAKDCVEKYGILPSQFTDYQGIVGDSSDNYKGVKGIGSKNAKELLQRLGSLEKIYENLDLAKNLLSPKMYQALIQDKGSAFLSKELATLERGCIKEFDFLSCAFPSENPLLKIKDELKEYGFISTLRDLENSPFIVENVPILNSTPILDNTPALDNAPKKSRMIVLESAEPLSMFLEKLENPNARVFMRLVLDKDKKILALAFLLQDQGYFLPLEEALFSPFSLEFLQNAFSQMLQHACIIGHDLKPLLSFLKAKYQVPLENIRIQDTQILAFLKNPEKVGFDEVLKEYLKEDLIPHEKIKDFKTKSKAEKSELLSMELNALKRLCEYFEKGGLEEDLLTLARDIETPFVKVLMGMEFQGFKIDAPYFKRLEQEFKNELNVLERQILDLIGVDFNLNSPKQLGEVLYDKLGLPKNKSHSTDEKNLLKILDKHPSIPLILEYRELNKLFNTYTTPLLRLKDKDDKIHTTFIQTGTATGRLSSHSPNLQNIPVRSPKGLLIRKGFIASSKEYCLLGVDYSQIELRLLAHFSQDKDLMEAFLKGRDIHLETSKALFGEDLAKEKRSIAKSINFGLVYGMGSKKLSETLSIPLSEAKSYIEAYFKRFPSIKDYLNGMREEILKTSKAFTLLGRYRVFDFTGVNDYVKGNYLREGVNAIFQGSASDLLKLGMLKVSERFKNNPSVRLLLQVHDELIFEIEEKNAPELQQEIQRILNDEVYPLRVPLETSAFIAKRWNELKG.

The 317-residue stretch at 1-317 folds into the 5'-3' exonuclease domain; that stretch reads MEQPVIKEGT…ILDNTPALDN (317 aa). The 3'-5' exonuclease domain maps to 318 to 494; the sequence is APKKSRMIVL…RLCEYFEKGG (177 aa). Residues 498–896 are polymerase; sequence DLLTLARDIE…FIAKRWNELK (399 aa).

It belongs to the DNA polymerase type-A family. Single-chain monomer with multiple functions.

It carries out the reaction DNA(n) + a 2'-deoxyribonucleoside 5'-triphosphate = DNA(n+1) + diphosphate. In terms of biological role, in addition to polymerase activity, this DNA polymerase exhibits 3'-5' and 5'-3' exonuclease activity. The protein is DNA polymerase I (polA) of Helicobacter pylori (strain J99 / ATCC 700824) (Campylobacter pylori J99).